The chain runs to 814 residues: ATP-dependent 6-phosphofructokinase 1 (814 aa).

Residues 1-420 (MDADASTITP…NLETYKLLTK (420 aa)) are N-terminal catalytic PFK domain 1. Residues glycine 55, 118–119 (RS), and 148–151 (GDGS) each bind ATP. Residue aspartate 149 participates in Mg(2+) binding. Residues 194-196 (SID), arginine 231, 238-240 (MGR), glutamate 294, arginine 322, and 328-331 (HVQR) each bind substrate. The Proton acceptor role is filled by aspartate 196. The interval 421–435 (MRTVEKDNLSEGHKF) is interdomain linker. The tract at residues 436–814 (NVAVINVGAP…EEESADSHMF (379 aa)) is C-terminal regulatory PFK domain 2. Residues lysine 505, 563 to 567 (TISNN), arginine 601, 608 to 610 (MGG), glutamate 664, arginine 690, 696 to 699 (HVQQ), and arginine 771 each bind beta-D-fructose 2,6-bisphosphate.

Belongs to the phosphofructokinase type A (PFKA) family. ATP-dependent PFK group I subfamily. Eukaryotic two domain clade 'E' sub-subfamily. In terms of assembly, homotetramer. It depends on Mg(2+) as a cofactor.

It is found in the cytoplasm. It carries out the reaction beta-D-fructose 6-phosphate + ATP = beta-D-fructose 1,6-bisphosphate + ADP + H(+). It participates in carbohydrate degradation; glycolysis; D-glyceraldehyde 3-phosphate and glycerone phosphate from D-glucose: step 3/4. Allosterically activated by ADP, AMP, or fructose 2,6-bisphosphate, and allosterically inhibited by ATP or citrate. Catalyzes the phosphorylation of D-fructose 6-phosphate to fructose 1,6-bisphosphate by ATP, the first committing step of glycolysis. The polypeptide is ATP-dependent 6-phosphofructokinase 1 (Caenorhabditis elegans).